Consider the following 340-residue polypeptide: N-acetyl-gamma-glutamyl-phosphate reductase (340 aa).

The active site involves C149.

It belongs to the NAGSA dehydrogenase family. Type 1 subfamily.

The protein localises to the cytoplasm. The catalysed reaction is N-acetyl-L-glutamate 5-semialdehyde + phosphate + NADP(+) = N-acetyl-L-glutamyl 5-phosphate + NADPH + H(+). It participates in amino-acid biosynthesis; L-arginine biosynthesis; N(2)-acetyl-L-ornithine from L-glutamate: step 3/4. Catalyzes the NADPH-dependent reduction of N-acetyl-5-glutamyl phosphate to yield N-acetyl-L-glutamate 5-semialdehyde. The polypeptide is N-acetyl-gamma-glutamyl-phosphate reductase (Ruthia magnifica subsp. Calyptogena magnifica).